A 271-amino-acid polypeptide reads, in one-letter code: Protein MGF 360-15R (271 aa).

Belongs to the asfivirus MGF 360 family.

Functionally, plays a role in virus cell tropism, and may be required for efficient virus replication in macrophages. This chain is Protein MGF 360-15R, found in African swine fever virus (isolate Tick/Malawi/Lil 20-1/1983) (ASFV).